The chain runs to 270 residues: Putative phosphoenolpyruvate synthase regulatory protein (270 aa).

G150–T157 contributes to the ADP binding site.

Belongs to the pyruvate, phosphate/water dikinase regulatory protein family. PSRP subfamily.

It carries out the reaction [pyruvate, water dikinase] + ADP = [pyruvate, water dikinase]-phosphate + AMP + H(+). The catalysed reaction is [pyruvate, water dikinase]-phosphate + phosphate + H(+) = [pyruvate, water dikinase] + diphosphate. In terms of biological role, bifunctional serine/threonine kinase and phosphorylase involved in the regulation of the phosphoenolpyruvate synthase (PEPS) by catalyzing its phosphorylation/dephosphorylation. The polypeptide is Putative phosphoenolpyruvate synthase regulatory protein (Shewanella denitrificans (strain OS217 / ATCC BAA-1090 / DSM 15013)).